The following is an 804-amino-acid chain: MAVAALALLALLPQALGQHNSSYVDYNVEANPDLFPQCLDTISLSFPDCQSGPLSKNLVCDSTASPYDRAAALVSLFTLEELIANTGNTSPGVPRLGLPPYQVWSEALHGLARANFTDNGAYSWATSFPSPILSAAAFNRTLINQIASIISTQGRAFNNAGRFGLDVYSPNINTFRHPVWGRGQETPGEDAYTLTAAYAYEYITGIQGGVNPEHLKLAATAKHFAGYDIENWDNHSRLGNDVNITQQDLAEYYTPQFLVAARDAHVHSFMCSYNAVNGVPSCSNTFFLQTLLRDTFSFVDHGYVSGDCGAVYGVFNPHGYAANEPSAAADAILAGTDIDCGTSYQYHFNESITTGAVARDDIERGFIRLYANLVELGYFDGNSSSSNPYRSLGWPDVQKTDAWNISYEAAVEGIVLLKNDGTLPLASPSEGKNKSIALIGPWANATTQLQGNYYGDAPYLISPVDAFTAAGYTVHYAPGTEISTNSTANFSAALSAARAADTIVFLGGIDNTIEAEAQDRSSIAWPGNQLELISQLAAQKSDDQPLVVYQMGGGQVDSSALKSNAKVNALLWGGYPGQSGGLALRDILTGARAPAGRLTTTQYPAAYAESFSALDMNLRPNETTQNPGQTYMWYTGEPVYAFGHGLFYTTFNASSAQAAKTKYTFNITDLTSAAHPDTTTVGQRTLFNFTASITNSGQRDSDYTALVYANTSTAGPSPYPNKWLVGFDRLAAVAKEGGTAELNVPVAVDRLARVDEAGNTVLFPGRYEVALNNEREVVVEVELVGEQVVLLKWPEEVQGVAGDE.

Positions 1-17 (MAVAALALLALLPQALG) are cleaved as a signal peptide. N-linked (GlcNAc...) asparagine glycans are attached at residues Asn20, Asn115, Asn139, Asn234, and Asn243. Residue Asp307 is part of the active site. Residues Asn349, Asn382, Asn404, Asn433, Asn444, Asn485, Asn489, Asn621, Asn652, Asn666, Asn688, and Asn710 are each glycosylated (N-linked (GlcNAc...) asparagine).

It belongs to the glycosyl hydrolase 3 family.

It localises to the secreted. The catalysed reaction is Hydrolysis of (1-&gt;4)-beta-D-xylans, to remove successive D-xylose residues from the non-reducing termini.. Its pathway is glycan degradation; xylan degradation. In terms of biological role, xylan 1,4-beta-xylosidase involved in the hydrolysis of xylan, a major structural heterogeneous polysaccharide found in plant biomass representing the second most abundant polysaccharide in the biosphere, after cellulose. The chain is Probable exo-1,4-beta-xylosidase xlnD (xlnD) from Aspergillus japonicus.